The primary structure comprises 213 residues: MAAPAASGLSRQVRSFSTSVVRPFAKLVRPPVQVYGIEGRYATALYSAASKEKKLDQVEKELLRVGQLLKDPKVSLAVLNPYIKRTVKVKSLNDITKREKFSPLTANLMNLLAENGRLGNTQGIISAFSTIMSVHRGEVPCTVTTASPLDDAVLSELKTVLKSFLSPNQILKLEIKTDPSIMGGMIVRIGEKYVDMSAKSKIQKLSKAMREML.

The transit peptide at 1–23 (MAAPAASGLSRQVRSFSTSVVRP) directs the protein to the mitochondrion. The short motif at 5–23 (AASGLSRQVRSFSTSVVRP) is the SIFI-degron element. N6-acetyllysine is present on residues lysine 54, lysine 60, lysine 70, and lysine 73. At lysine 90 the chain carries N6-succinyllysine. 3 positions are modified to N6-acetyllysine; alternate: lysine 100, lysine 158, and lysine 162. 3 positions are modified to N6-succinyllysine; alternate: lysine 100, lysine 158, and lysine 162. 3 positions are modified to N6-acetyllysine: lysine 172, lysine 176, and lysine 192. Position 199 is an N6-succinyllysine (lysine 199).

This sequence belongs to the ATPase delta chain family. In terms of assembly, component of the ATP synthase complex composed at least of ATP5F1A/subunit alpha, ATP5F1B/subunit beta, ATP5MC1/subunit c (homooctomer), MT-ATP6/subunit a, MT-ATP8/subunit 8, ATP5ME/subunit e, ATP5MF/subunit f, ATP5MG/subunit g, ATP5MK/subunit k, ATP5MJ/subunit j, ATP5F1C/subunit gamma, ATP5F1D/subunit delta, ATP5F1E/subunit epsilon, ATP5PF/subunit F6, ATP5PB/subunit b, ATP5PD/subunit d, ATP5PO/subunit OSCP. ATP synthase complex consists of a soluble F(1) head domain (subunits alpha(3) and beta(3)) - the catalytic core - and a membrane F(0) domain - the membrane proton channel (subunits c, a, 8, e, f, g, k and j). These two domains are linked by a central stalk (subunits gamma, delta, and epsilon) rotating inside the F1 region and a stationary peripheral stalk (subunits F6, b, d, and OSCP). Acetylation of Lys-70 and Lys-158 is observed in liver mitochondria from fasted mice but not from fed mice. Post-translationally, acetylation at Lys-162 decreases ATP production. Deacetylated by SIRT3. In terms of processing, in response to mitochondrial stress, the precursor protein is ubiquitinated by the SIFI complex in the cytoplasm before mitochondrial import, leading to its degradation. Within the SIFI complex, UBR4 initiates ubiquitin chain that are further elongated or branched by KCMF1.

The protein resides in the mitochondrion. It is found in the mitochondrion inner membrane. Subunit OSCP, of the mitochondrial membrane ATP synthase complex (F(1)F(0) ATP synthase or Complex V) that produces ATP from ADP in the presence of a proton gradient across the membrane which is generated by electron transport complexes of the respiratory chain. ATP synthase complex consist of a soluble F(1) head domain - the catalytic core - and a membrane F(1) domain - the membrane proton channel. These two domains are linked by a central stalk rotating inside the F(1) region and a stationary peripheral stalk. During catalysis, ATP synthesis in the catalytic domain of F(1) is coupled via a rotary mechanism of the central stalk subunits to proton translocation. In vivo, can only synthesize ATP although its ATP hydrolase activity can be activated artificially in vitro. Part of the complex F(0) domain. Part of the complex F(0) domain and the peripheric stalk, which acts as a stator to hold the catalytic alpha(3)beta(3) subcomplex and subunit a/ATP6 static relative to the rotary elements. In Mus musculus (Mouse), this protein is ATP synthase peripheral stalk subunit OSCP, mitochondrial.